The primary structure comprises 138 residues: Large ribosomal subunit protein uL16 (138 aa).

The protein belongs to the universal ribosomal protein uL16 family. In terms of assembly, part of the 50S ribosomal subunit.

Its function is as follows. Binds 23S rRNA and is also seen to make contacts with the A and possibly P site tRNAs. This Paramagnetospirillum magneticum (strain ATCC 700264 / AMB-1) (Magnetospirillum magneticum) protein is Large ribosomal subunit protein uL16.